A 218-amino-acid polypeptide reads, in one-letter code: Capsid protein (218 aa).

Met1 carries the N-acetylmethionine; by host modification. The segment covering Met1–Gly10 has biased composition (low complexity). A disordered region spans residues Met1–Ala30. Residues Arg11–Ser21 are compositionally biased toward basic residues.

Belongs to the cucumovirus capsid protein family.

Its subcellular location is the virion. In terms of biological role, capsid protein. Probably binds RNA and plays a role in packaging. This chain is Capsid protein, found in Cucumber mosaic virus (strain Kor) (CMV).